We begin with the raw amino-acid sequence, 518 residues long: Glutamate--cysteine ligase (518 aa).

This sequence belongs to the glutamate--cysteine ligase type 1 family. Type 1 subfamily.

The enzyme catalyses L-cysteine + L-glutamate + ATP = gamma-L-glutamyl-L-cysteine + ADP + phosphate + H(+). It functions in the pathway sulfur metabolism; glutathione biosynthesis; glutathione from L-cysteine and L-glutamate: step 1/2. The chain is Glutamate--cysteine ligase from Citrobacter koseri (strain ATCC BAA-895 / CDC 4225-83 / SGSC4696).